The following is a 111-amino-acid chain: Ciprofloxacin tolerance protein (111 aa).

Topologically, residues 1 to 5 are periplasmic; sequence MVTAN. Residues 6 to 26 traverse the membrane as a helical segment; it reads FAAIAGLSLIAVALVAVFFSP. Residues 27 to 30 are Cytoplasmic-facing; that stretch reads YRRW. A helical transmembrane segment spans residues 31-51; it reads LGFMLAGMFFWGLLEVVRFGV. The Periplasmic segment spans residues 52 to 58; sequence QVTFEMP. A helical transmembrane segment spans residues 59-79; sequence VTYSYLTALSLAMVMVTFVLL. The Cytoplasmic portion of the chain corresponds to 80–111; sequence REDKQAQKALANRQYIEHTPVYEDDQQQCSSR.

It localises to the cell inner membrane. Functionally, may play a role in cellular filamentation, especially in response to ciprofloxacin. Increased expression confers tolerance to the antibiotic ciprofloxacin. This Acinetobacter baumannii protein is Ciprofloxacin tolerance protein.